A 141-amino-acid chain; its full sequence is Nucleoside diphosphate kinase (141 aa).

ATP contacts are provided by lysine 11, phenylalanine 59, arginine 87, threonine 93, arginine 104, and asparagine 114. The active-site Pros-phosphohistidine intermediate is histidine 117.

Belongs to the NDK family. As to quaternary structure, homotetramer. Mg(2+) serves as cofactor.

Its subcellular location is the cytoplasm. The catalysed reaction is a 2'-deoxyribonucleoside 5'-diphosphate + ATP = a 2'-deoxyribonucleoside 5'-triphosphate + ADP. It carries out the reaction a ribonucleoside 5'-diphosphate + ATP = a ribonucleoside 5'-triphosphate + ADP. Major role in the synthesis of nucleoside triphosphates other than ATP. The ATP gamma phosphate is transferred to the NDP beta phosphate via a ping-pong mechanism, using a phosphorylated active-site intermediate. This Acidithiobacillus ferrooxidans (strain ATCC 53993 / BNL-5-31) (Leptospirillum ferrooxidans (ATCC 53993)) protein is Nucleoside diphosphate kinase.